The sequence spans 364 residues: Anthranilate phosphoribosyltransferase (364 aa).

Positions 1–10 (MTSGPSQPFP) are enriched in polar residues. The interval 1 to 22 (MTSGPSQPFPSASGPDDGPSWP) is disordered. Residues glycine 101, 104–105 (GD), threonine 109, 111–114 (NLST), 129–137 (KHGNRAASS), and glycine 141 each bind 5-phospho-alpha-D-ribose 1-diphosphate. Residue glycine 101 participates in anthranilate binding. Serine 113 is a Mg(2+) binding site. An anthranilate-binding site is contributed by asparagine 132. An anthranilate-binding site is contributed by arginine 187. Mg(2+) contacts are provided by aspartate 245 and glutamate 246.

The protein belongs to the anthranilate phosphoribosyltransferase family. Homodimer. Mg(2+) serves as cofactor.

The catalysed reaction is N-(5-phospho-beta-D-ribosyl)anthranilate + diphosphate = 5-phospho-alpha-D-ribose 1-diphosphate + anthranilate. Its pathway is amino-acid biosynthesis; L-tryptophan biosynthesis; L-tryptophan from chorismate: step 2/5. Catalyzes the transfer of the phosphoribosyl group of 5-phosphorylribose-1-pyrophosphate (PRPP) to anthranilate to yield N-(5'-phosphoribosyl)-anthranilate (PRA). The sequence is that of Anthranilate phosphoribosyltransferase from Mycolicibacterium smegmatis (strain ATCC 700084 / mc(2)155) (Mycobacterium smegmatis).